The chain runs to 133 residues: MIVGLGNDLVDIRRIERMLVRYGERFIQRIFTDIERNRSENLKKNSSSYAKRFAAKEACAKALGTGIACGINWKDMGVVNLSSGKPIMQLTNHAQVQLQKLLPPHHDAIIHLSITDDFPWAQAFVIIEALPRG.

Mg(2+) is bound by residues Asp-8 and Glu-57.

It belongs to the P-Pant transferase superfamily. AcpS family. Requires Mg(2+) as cofactor.

Its subcellular location is the cytoplasm. It carries out the reaction apo-[ACP] + CoA = holo-[ACP] + adenosine 3',5'-bisphosphate + H(+). Functionally, transfers the 4'-phosphopantetheine moiety from coenzyme A to a Ser of acyl-carrier-protein. This is Holo-[acyl-carrier-protein] synthase from Bartonella tribocorum (strain CIP 105476 / IBS 506).